A 642-amino-acid chain; its full sequence is 1-deoxy-D-xylulose-5-phosphate synthase 2 (642 aa).

Thiamine diphosphate-binding positions include His-73 and 113–115 (SHA). Asp-144 lines the Mg(2+) pocket. Residues 145 to 146 (GA), Asn-174, Tyr-285, and Glu-366 each bind thiamine diphosphate. Position 174 (Asn-174) interacts with Mg(2+).

This sequence belongs to the transketolase family. DXPS subfamily. In terms of assembly, homodimer. Mg(2+) is required as a cofactor. Requires thiamine diphosphate as cofactor.

The catalysed reaction is D-glyceraldehyde 3-phosphate + pyruvate + H(+) = 1-deoxy-D-xylulose 5-phosphate + CO2. It functions in the pathway metabolic intermediate biosynthesis; 1-deoxy-D-xylulose 5-phosphate biosynthesis; 1-deoxy-D-xylulose 5-phosphate from D-glyceraldehyde 3-phosphate and pyruvate: step 1/1. Functionally, catalyzes the acyloin condensation reaction between C atoms 2 and 3 of pyruvate and glyceraldehyde 3-phosphate to yield 1-deoxy-D-xylulose-5-phosphate (DXP). The chain is 1-deoxy-D-xylulose-5-phosphate synthase 2 from Streptomyces avermitilis (strain ATCC 31267 / DSM 46492 / JCM 5070 / NBRC 14893 / NCIMB 12804 / NRRL 8165 / MA-4680).